A 116-amino-acid chain; its full sequence is Iron-sulfur cluster insertion protein ErpA (116 aa).

3 residues coordinate iron-sulfur cluster: cysteine 44, cysteine 108, and cysteine 110.

It belongs to the HesB/IscA family. As to quaternary structure, homodimer. The cofactor is iron-sulfur cluster.

Its function is as follows. Required for insertion of 4Fe-4S clusters for at least IspG. The protein is Iron-sulfur cluster insertion protein ErpA of Pseudomonas entomophila (strain L48).